The following is a 424-amino-acid chain: Adenylosuccinate synthetase (424 aa).

GTP contacts are provided by residues 11 to 17 and 39 to 41; these read GDEGKGK and GHT. Catalysis depends on D12, which acts as the Proton acceptor. Positions 12 and 39 each coordinate Mg(2+). IMP is bound by residues 12-15, 37-40, T127, R141, Q223, T238, and R302; these read DEGK and NAGH. Catalysis depends on H40, which acts as the Proton donor. Substrate is bound at residue 298–304; sequence TTTGRGR. GTP contacts are provided by residues R304, 330-332, and 412-414; these read KLD and SVG.

It belongs to the adenylosuccinate synthetase family. Homodimer. The cofactor is Mg(2+).

It localises to the cytoplasm. It catalyses the reaction IMP + L-aspartate + GTP = N(6)-(1,2-dicarboxyethyl)-AMP + GDP + phosphate + 2 H(+). It functions in the pathway purine metabolism; AMP biosynthesis via de novo pathway; AMP from IMP: step 1/2. Functionally, plays an important role in the de novo pathway of purine nucleotide biosynthesis. Catalyzes the first committed step in the biosynthesis of AMP from IMP. This Methanosarcina barkeri (strain Fusaro / DSM 804) protein is Adenylosuccinate synthetase.